A 181-amino-acid chain; its full sequence is Transcription factor bHLH167 (181 aa).

Positions 1–22 (MGRAREIGEGNSSSLREQRNLR) are disordered. The 50-residue stretch at 14-63 (SLREQRNLREKDRRMRMKHLFSILSSHVSPTRKLPVPHLIDQATSYMIQL) folds into the bHLH domain.

This sequence belongs to the bHLH protein family.

The protein resides in the nucleus. The protein is Transcription factor bHLH167 of Arabidopsis thaliana (Mouse-ear cress).